The primary structure comprises 263 residues: Hydroxyacylglutathione hydrolase (263 aa).

Zn(2+)-binding residues include His-55, His-57, Asp-59, His-60, His-117, Asp-134, and His-172.

The protein belongs to the metallo-beta-lactamase superfamily. Glyoxalase II family. Monomer. The cofactor is Zn(2+).

The catalysed reaction is an S-(2-hydroxyacyl)glutathione + H2O = a 2-hydroxy carboxylate + glutathione + H(+). The protein operates within secondary metabolite metabolism; methylglyoxal degradation; (R)-lactate from methylglyoxal: step 2/2. Its function is as follows. Thiolesterase that catalyzes the hydrolysis of S-D-lactoyl-glutathione to form glutathione and D-lactic acid. The chain is Hydroxyacylglutathione hydrolase from Shewanella baltica (strain OS185).